The chain runs to 246 residues: Sortase B (246 aa).

The chain crosses the membrane as a helical span at residues 5-24; that stretch reads SFLGKSLTLVVLGVFLFSGW.

The protein belongs to the bacterial sortase family. Class B subfamily.

The protein resides in the cell membrane. Functionally, transpeptidase that anchors surface proteins to the cell wall. Recognizes and modifies its substrate by proteolytic cleavage of a C-terminal sorting signal. Following cleavage, a covalent intermediate is formed via a thioester bond between the sortase and its substrate, which is then transferred and covalently attached to the cell wall. Catalyzes a cell wall sorting reaction in which a surface protein with the consensus sorting signal NP(Q/K)(T/S)(N/G/S)(D/A) is cleaved between the fourth and fifth residues, and the fourth position is linked to the cell wall. This is not the major sortase in Listeria, it seems to anchor only 2 proteins, Hbp2 (SvpA) and Hbp1. The protein is Sortase B of Listeria monocytogenes serovar 1/2a (strain ATCC BAA-679 / EGD-e).